Here is a 506-residue protein sequence, read N- to C-terminus: Methylthioalkylmalate synthase 2, chloroplastic (506 aa).

The N-terminal 49 residues, 1 to 49 (MASSLLTSSGMIPTTGSTVVGRSVLPFQSSLHSLRLTHSYKNPALFISC), are a transit peptide targeting the chloroplast. The 275-residue stretch at 85 to 359 (VRVFDTTLRD…YTRIDTRQIM (275 aa)) folds into the Pyruvate carboxyltransferase domain.

The protein belongs to the alpha-IPM synthase/homocitrate synthase family.

The protein resides in the plastid. It localises to the chloroplast. The catalysed reaction is an omega-(methylsulfanyl)-2-oxoalkanoate + acetyl-CoA + H2O = a 2-(omega-methylsulfanyl)alkylmalate + CoA + H(+). Functionally, catalyzes only the first methionine chain elongation cycle. The sequence is that of Methylthioalkylmalate synthase 2, chloroplastic (MAM2) from Arabidopsis thaliana (Mouse-ear cress).